The following is a 180-amino-acid chain: UPF0340 protein LACR_0494 (180 aa).

This sequence belongs to the UPF0340 family.

In Lactococcus lactis subsp. cremoris (strain SK11), this protein is UPF0340 protein LACR_0494.